The sequence spans 525 residues: GMP synthase [glutamine-hydrolyzing] (525 aa).

Residues 9–207 (RILILDFGSQ…ILDICGCEAL (199 aa)) enclose the Glutamine amidotransferase type-1 domain. The active-site Nucleophile is the Cys-86. Catalysis depends on residues His-181 and Glu-183. One can recognise a GMPS ATP-PPase domain in the interval 208–400 (WTPSKIAEDA…LGLPYDMVYR (193 aa)). 235–241 (SGGVDSS) provides a ligand contact to ATP.

As to quaternary structure, homodimer.

The enzyme catalyses XMP + L-glutamine + ATP + H2O = GMP + L-glutamate + AMP + diphosphate + 2 H(+). It participates in purine metabolism; GMP biosynthesis; GMP from XMP (L-Gln route): step 1/1. In terms of biological role, catalyzes the synthesis of GMP from XMP. The polypeptide is GMP synthase [glutamine-hydrolyzing] (Pseudomonas fluorescens (strain ATCC BAA-477 / NRRL B-23932 / Pf-5)).